Here is a 336-residue protein sequence, read N- to C-terminus: UPF0324 membrane protein BR0028/BS1330_I0028 (336 aa).

11 consecutive transmembrane segments (helical) span residues 9-26 (ILPG…AMVL), 36-55 (RAWL…VRSL), 68-90 (FSAK…ASAV), 94-116 (GSGL…YGIG), 128-150 (LVAC…VIGA), 160-182 (AFTA…LLGL), 189-211 (ILAG…VSLL), 221-240 (LVRV…ISGN), 247-269 (PGFF…LHSL), 279-301 (AIQY…GVDI), and 313-335 (LTAI…MLGV).

The protein belongs to the UPF0324 family.

The protein resides in the cell membrane. This Brucella suis biovar 1 (strain 1330) protein is UPF0324 membrane protein BR0028/BS1330_I0028.